The primary structure comprises 445 residues: Protein EMP47 (445 aa).

Positions 1 to 28 (MMMLITMKSTVLLSVFTVLATWAGLLEA) are cleaved as a signal peptide. At 29–412 (HPLGDTSDAS…DGPQVDEIAR (384 aa)) the chain is on the lumenal side. The L-type lectin-like domain maps to 36–254 (DASKLSSDYS…EIFKMQFFNG (219 aa)). Cysteines 179 and 213 form a disulfide. Residues 413 to 433 (KLMIWLLPLIFIMLVMAYYTF) traverse the membrane as a helical segment. The tract at residues 430–433 (YYTF) is mediates the interactions with COPI and COPII coat complexes. Residues 434–445 (RIRQEIIKTKLL) lie on the Cytoplasmic side of the membrane. Positions 441-445 (KTKLL) match the Di-lysine motif motif.

The protein belongs to the EMP46/EMP47 family. As to quaternary structure, homooligomers. Interacts with EMP46 in the endoplasmic reticulum membrane. Interacts with the coatomer proteins COP1, SEC21 and SEC23.

The protein resides in the golgi apparatus membrane. It is found in the endoplasmic reticulum membrane. Its function is as follows. Involved in the secretion of glycoproteins and in nucleus architecture and gene silencing. Required for the endoplasmic reticulum exit of EMP46. This Saccharomyces cerevisiae (strain ATCC 204508 / S288c) (Baker's yeast) protein is Protein EMP47 (EMP47).